Consider the following 362-residue polypeptide: 3-dehydroquinate synthase (362 aa).

NAD(+) is bound by residues 70–75 (EGEQYK), 104–108 (GVIGD), 128–129 (TT), K141, K150, and 168–171 (TLTT). Zn(2+) is bound by residues E183, H246, and H263.

The protein belongs to the sugar phosphate cyclases superfamily. Dehydroquinate synthase family. It depends on Co(2+) as a cofactor. Zn(2+) serves as cofactor. The cofactor is NAD(+).

The protein resides in the cytoplasm. It catalyses the reaction 7-phospho-2-dehydro-3-deoxy-D-arabino-heptonate = 3-dehydroquinate + phosphate. It participates in metabolic intermediate biosynthesis; chorismate biosynthesis; chorismate from D-erythrose 4-phosphate and phosphoenolpyruvate: step 2/7. Its function is as follows. Catalyzes the conversion of 3-deoxy-D-arabino-heptulosonate 7-phosphate (DAHP) to dehydroquinate (DHQ). This is 3-dehydroquinate synthase from Histophilus somni (strain 129Pt) (Haemophilus somnus).